The following is a 303-amino-acid chain: GTPase Era (303 aa).

In terms of domain architecture, Era-type G spans 9-176 (KSGFVSIIGR…VEQIVEHMEE (168 aa)). The segment at 17–24 (GRPNVGKS) is G1. Position 17–24 (17–24 (GRPNVGKS)) interacts with GTP. Positions 43–47 (QTTRN) are G2. The interval 64–67 (DTPG) is G3. GTP-binding positions include 64-68 (DTPGI) and 126-129 (NKID). The tract at residues 126-129 (NKID) is G4. Residues 155-157 (ISA) form a G5 region. The KH type-2 domain maps to 199–284 (IREKVLHLTK…YLELWVKVQK (86 aa)).

This sequence belongs to the TRAFAC class TrmE-Era-EngA-EngB-Septin-like GTPase superfamily. Era GTPase family. As to quaternary structure, monomer.

It is found in the cytoplasm. The protein resides in the cell membrane. Its function is as follows. An essential GTPase that binds both GDP and GTP, with rapid nucleotide exchange. Plays a role in 16S rRNA processing and 30S ribosomal subunit biogenesis and possibly also in cell cycle regulation and energy metabolism. In Shouchella clausii (strain KSM-K16) (Alkalihalobacillus clausii), this protein is GTPase Era.